A 365-amino-acid chain; its full sequence is Glutamate 5-kinase 1 (365 aa).

An ATP-binding site is contributed by K9. Substrate-binding residues include S49, D136, and N148. ATP contacts are provided by residues 168-169 (TD) and 210-216 (TGGMKSK). The PUA domain maps to 276–353 (SGKITVDEGA…DEFHHEEGIE (78 aa)).

Belongs to the glutamate 5-kinase family.

Its subcellular location is the cytoplasm. It catalyses the reaction L-glutamate + ATP = L-glutamyl 5-phosphate + ADP. Its pathway is amino-acid biosynthesis; L-proline biosynthesis; L-glutamate 5-semialdehyde from L-glutamate: step 1/2. In terms of biological role, catalyzes the transfer of a phosphate group to glutamate to form L-glutamate 5-phosphate. The protein is Glutamate 5-kinase 1 of Bacillus licheniformis (strain ATCC 14580 / DSM 13 / JCM 2505 / CCUG 7422 / NBRC 12200 / NCIMB 9375 / NCTC 10341 / NRRL NRS-1264 / Gibson 46).